Consider the following 310-residue polypeptide: Upstream stimulatory factor 1 (310 aa).

The span at 1–17 shows a compositional bias: polar residues; sequence MKGQQKTAETEEGTVQI. Disordered regions lie at residues 1–26 and 171–209; these read MKGQ…ATGE and QGGS…EVER. A compositionally biased stretch (basic and acidic residues) spans 194 to 209; sequence TTRDEKRRAQHNEVER. The region spanning 199–254 is the bHLH domain; the sequence is KRRAQHNEVERRRRDKINNWIVQLSKIIPDCSMESTKSGQSKGGILSKACDYIQEL. The tract at residues 271 to 292 is leucine-zipper; sequence LQLDNDVLRQQVEDLKNKNLLL. Residue K306 forms a Glycyl lysine isopeptide (Lys-Gly) (interchain with G-Cter in SUMO2) linkage.

In terms of assembly, efficient DNA binding requires dimerization with another bHLH protein. Binds DNA as a homodimer or a heterodimer (USF1/USF2).

It localises to the nucleus. Functionally, transcription factor that binds to a symmetrical DNA sequence (E-boxes) (5'-CACGTG-3') that is found in a variety of viral and cellular promoters. Regulates the expression of the surfactant protein-A (SP-A) gene. This chain is Upstream stimulatory factor 1 (USF1), found in Oryctolagus cuniculus (Rabbit).